We begin with the raw amino-acid sequence, 885 residues long: DNA mismatch repair protein MutS (885 aa).

Residues 1 to 67 (MAPGEQQLSL…SNNDDEGLPR (67 aa)) are disordered. The span at 26 to 36 (SEDKTEESERP) shows a compositional bias: basic and acidic residues. 691–698 (GPNASGKS) provides a ligand contact to ATP.

Belongs to the DNA mismatch repair MutS family.

This protein is involved in the repair of mismatches in DNA. It is possible that it carries out the mismatch recognition step. This protein has a weak ATPase activity. This Synechococcus sp. (strain RCC307) protein is DNA mismatch repair protein MutS.